Reading from the N-terminus, the 320-residue chain is ATP-dependent 6-phosphofructokinase (320 aa).

G12 serves as a coordination point for ATP. 22–26 contributes to the ADP binding site; that stretch reads RGVVR. ATP contacts are provided by residues 73 to 74 and 103 to 106; these read RF and GDGS. D104 contacts Mg(2+). Residue 126 to 128 participates in substrate binding; sequence TID. The Proton acceptor role is filled by D128. ADP is bound at residue R155. Residues R163 and 170 to 172 each bind substrate; that span reads MGR. ADP contacts are provided by residues 186–188, K212, and 214–216; these read GCE and KKH. Substrate is bound by residues E223, R244, and 250 to 253; that span reads HIQR.

Belongs to the phosphofructokinase type A (PFKA) family. ATP-dependent PFK group I subfamily. Prokaryotic clade 'B1' sub-subfamily. In terms of assembly, homotetramer. Mg(2+) is required as a cofactor.

It localises to the cytoplasm. The enzyme catalyses beta-D-fructose 6-phosphate + ATP = beta-D-fructose 1,6-bisphosphate + ADP + H(+). The protein operates within carbohydrate degradation; glycolysis; D-glyceraldehyde 3-phosphate and glycerone phosphate from D-glucose: step 3/4. With respect to regulation, allosterically activated by ADP and other diphosphonucleosides, and allosterically inhibited by phosphoenolpyruvate. Catalyzes the phosphorylation of D-fructose 6-phosphate to fructose 1,6-bisphosphate by ATP, the first committing step of glycolysis. The polypeptide is ATP-dependent 6-phosphofructokinase (Edwardsiella ictaluri (strain 93-146)).